The chain runs to 946 residues: MKPLSSPLQQYWQTVVERLPEPLAEKSLSAQAKSVLTFSDFVQDSVIAHPEWLTELESQSPQADEWQHYAAWLQEALSNVSDEAGLMRELRLFRRRIMVRIAWAQTLALVTEESILQQLSHLAETLIVAARDWLYDACCREWGTPCNAQGEAQPLLILGMGKLGGGELNFSSDIDLIFAWPEHGCTQGGRRELDNAQFFTRMGQRLIKVLDQPTQDGFVYRVDMRLRPFGESGPLVLSFAALEDYYQEQGRDWERYAMVKARIMGDSEGVYANELRAMLRPFVFRRYIDFSVIQSLRNMKGMIAREVRRRGLTDNIKLGAGGIREIEFIVQVFQLIRGGREPSLQSRSLLPTLSVIAALHLLSENDAEQLRVAYLFLRRLENLLQSINDEQTQTLPSDELNRARLAWAMDFADWPQLTGALTAHMTNVRRVFNELIGDDESETQEESLSEQWRELWQDALQEDDTTPVLAHLSEDDRKQVLTLIADFRKELDKRTIGPRGRQVLDHLMPHLLSDVCAREDAAVTLSRITALLVGIVTRTTYLELLSEFPAALKHLISLCAASPMIASQLARYPLLLDELLDPNTLYQPTATDAYRDELRQYLLRVPEDDEEQQLEALRQFKQAQLLRIAAADIAGTLPVMKVSDHLTWLAEAMIDAVVQQAWVQMVARYGKPNHLNDREGRGFAVVGYGKLGGWELGYSSDLDLIFLHDCPMDAMTDGEREIDGRQFYLRLAQRIMHLFNTRTSSGILYEVDARLRPSGAAGMLVTSAEAFADYQKNEAWTWEHQALVRARVVYGDPQLTAHFDAVRREIMMLPREGKTLQTEVREMREKMRAHLGNKHRNRFDIKADEGGITDIEFITQYLVLRYAHEKPKLTRWSDNVRILELLAQNDIMEEQEAMALTRAYTTLRDELHHLALQELPGHVSEDCFTAERDLVRASWQKWLVEE.

The interval 1-440 (MKPLSSPLQQ…VFNELIGDDE (440 aa)) is adenylyl removase. The adenylyl transferase stretch occupies residues 449–946 (SEQWRELWQD…ASWQKWLVEE (498 aa)).

It belongs to the GlnE family. Mg(2+) is required as a cofactor.

The enzyme catalyses [glutamine synthetase]-O(4)-(5'-adenylyl)-L-tyrosine + phosphate = [glutamine synthetase]-L-tyrosine + ADP. It catalyses the reaction [glutamine synthetase]-L-tyrosine + ATP = [glutamine synthetase]-O(4)-(5'-adenylyl)-L-tyrosine + diphosphate. Functionally, involved in the regulation of glutamine synthetase GlnA, a key enzyme in the process to assimilate ammonia. When cellular nitrogen levels are high, the C-terminal adenylyl transferase (AT) inactivates GlnA by covalent transfer of an adenylyl group from ATP to specific tyrosine residue of GlnA, thus reducing its activity. Conversely, when nitrogen levels are low, the N-terminal adenylyl removase (AR) activates GlnA by removing the adenylyl group by phosphorolysis, increasing its activity. The regulatory region of GlnE binds the signal transduction protein PII (GlnB) which indicates the nitrogen status of the cell. The sequence is that of Bifunctional glutamine synthetase adenylyltransferase/adenylyl-removing enzyme from Shigella boydii serotype 4 (strain Sb227).